A 1710-amino-acid polypeptide reads, in one-letter code: Chromodomain-helicase-DNA-binding protein 1 (1710 aa).

The span at 1–10 shows a compositional bias: basic and acidic residues; sequence MNGHSDEESV. The interval 1–252 is disordered; the sequence is MNGHSDEESV…KEDEEMKTDS (252 aa). The span at 35–63 shows a compositional bias: low complexity; sequence SSGSSSDGSSSQSGSSDSDSGSESGSQSE. Basic and acidic residues predominate over residues 67–85; the sequence is DTSRENKVQAKPPKVDGAE. Residues 105–121 are compositionally biased toward low complexity; it reads QQQQQQQQQHQASSNSG. Over residues 122 to 136 the composition is skewed to acidic residues; the sequence is SEEDSSSSEDSDDSS. Residues 152 to 163 are compositionally biased toward low complexity; the sequence is SGSGSPSQSGSD. Residues 187–210 are compositionally biased toward basic residues; that stretch reads KVKSRKPQNRSKSKNGKKILGQKK. Phosphoserine occurs at positions 215 and 216. Residues 215-226 show a composition bias toward acidic residues; sequence SSEEDDDEEDYD. The residue at position 237 (Thr237) is a Phosphothreonine. Ser241 is subject to Phosphoserine. Phosphothreonine is present on Thr250. Ser252 carries the post-translational modification Phosphoserine. 2 consecutive Chromo domains span residues 272 to 364 and 389 to 452; these read ETIE…RWLK and QIVE…TPFK. Ser471 bears the Phosphoserine mark. Positions 493 to 663 constitute a Helicase ATP-binding domain; that stretch reads AHSWCKGNSC…WSLLHFIMPE (171 aa). 506–513 lines the ATP pocket; it reads DEMGLGKT. The short motif at 614–617 is the DEAH box element; the sequence is DEAH. Residues 792–943 form the Helicase C-terminal domain; it reads LLDKLLIRLR…HLVIQRMDTT (152 aa). Residues Ser1025, Ser1040, Ser1081, Ser1085, Ser1096, Ser1098, Ser1100, and Ser1102 each carry the phosphoserine modification. The segment at 1080–1120 is disordered; that stretch reads ISFNGSEGRRSRSRRYSGSDSDSISEGKRPKKRGRPRTIPR. Basic residues predominate over residues 1108-1117; sequence RPKKRGRPRT. Position 1161 is a phosphoserine (Ser1161). Disordered stretches follow at residues 1321-1408 and 1502-1710; these read EALS…ESEE and KKRQ…SRKT. The segment covering 1329–1345 has biased composition (basic residues); the sequence is SKRRKARAKKNKAMKSI. A phosphoserine mark is found at Ser1353, Ser1355, Ser1356, Ser1360, Ser1363, Ser1371, and Ser1373. Basic and acidic residues predominate over residues 1370–1379; sequence LSESKSDGRE. Residues 1409 to 1511 form a CHD1 helical C-terminal domain (CHCT) region; sequence LDQKTFSICK…KKRQESQQNS (103 aa). Residues 1507–1516 are compositionally biased toward low complexity; that stretch reads SQQNSDQNSN. 2 stretches are compositionally biased toward basic and acidic residues: residues 1523–1573 and 1582–1670; these read RNPD…DSRK and GKDH…DHRA. Phosphoserine is present on Ser1622. 3 repeat units span residues 1628–1632, 1634–1638, and 1640–1644. A 3 X 5 AA repeats of H-S-D-H-R region spans residues 1628 to 1644; the sequence is HSDHRSHSDHRLHSDHR. Residues Ser1677, Arg1688, and Ser1689 each carry the phosphoserine modification. Residues 1690–1701 show a composition bias toward basic and acidic residues; sequence PFEHSVEHKSTP.

The protein belongs to the SNF2/RAD54 helicase family. As to quaternary structure, component of the SAGA complex. Interacts with BCLAF1, NCoR, SRP20 and SAFB. Specifically interacts with methylated H3K4me2 and H3K4me3. Interacts with the FACT complex, the PAF complex and the U2 snRNP. Interacts directly with PAF1, SFA3A1, SFA3A2, SFA3A3, SNF2 and SSRP1. Expressed in many tissues including in the brain, where the highest level of expression is found in the cerebellum and basal ganglia.

The protein resides in the nucleus. Its subcellular location is the cytoplasm. It catalyses the reaction ATP + H2O = ADP + phosphate + H(+). Its function is as follows. ATP-dependent chromatin-remodeling factor which functions as substrate recognition component of the transcription regulatory histone acetylation (HAT) complex SAGA. Regulates polymerase II transcription. Also required for efficient transcription by RNA polymerase I, and more specifically the polymerase I transcription termination step. Regulates negatively DNA replication. Not only involved in transcription-related chromatin-remodeling, but also required to maintain a specific chromatin configuration across the genome. Is also associated with histone deacetylase (HDAC) activity. Required for the bridging of SNF2, the FACT complex, the PAF complex as well as the U2 snRNP complex to H3K4me3. Functions to modulate the efficiency of pre-mRNA splicing in part through physical bridging of spliceosomal components to H3K4me3. Required for maintaining open chromatin and pluripotency in embryonic stem cells. This chain is Chromodomain-helicase-DNA-binding protein 1, found in Homo sapiens (Human).